The sequence spans 449 residues: Tubulin alpha-1B chain (449 aa).

Glutamine 11 is a GTP binding site. Lysine 40 is subject to N6-acetyllysine. The GTP site is built by glutamate 71, serine 140, glycine 144, threonine 145, threonine 179, asparagine 206, and asparagine 228. Glutamate 71 is a Mg(2+) binding site. Residue glutamate 254 is part of the active site.

The protein belongs to the tubulin family. As to quaternary structure, dimer of alpha and beta chains. A typical microtubule is a hollow water-filled tube with an outer diameter of 25 nm and an inner diameter of 15 nM. Alpha-beta heterodimers associate head-to-tail to form protofilaments running lengthwise along the microtubule wall with the beta-tubulin subunit facing the microtubule plus end conferring a structural polarity. Microtubules usually have 13 protofilaments but different protofilament numbers can be found in some organisms and specialized cells. Requires Mg(2+) as cofactor. Post-translationally, acetylation of alpha chains at Lys-40 stabilizes microtubules and affects affinity and processivity of microtubule motors. This modification has a role in multiple cellular functions, ranging from cell motility, cell cycle progression or cell differentiation to intracellular trafficking and signaling.

The protein resides in the cytoplasm. It localises to the cytoskeleton. The protein localises to the spindle. It is found in the nucleus. The catalysed reaction is GTP + H2O = GDP + phosphate + H(+). Functionally, tubulin is the major constituent of microtubules, a cylinder consisting of laterally associated linear protofilaments composed of alpha- and beta-tubulin heterodimers. Microtubules grow by the addition of GTP-tubulin dimers to the microtubule end, where a stabilizing cap forms. Below the cap, tubulin dimers are in GDP-bound state, owing to GTPase activity of alpha-tubulin. The polypeptide is Tubulin alpha-1B chain (ALTBN) (Physarum polycephalum (Slime mold)).